The chain runs to 319 residues: 4-hydroxy-3-methylbut-2-enyl diphosphate reductase (319 aa).

Cys18 lines the [4Fe-4S] cluster pocket. Residues His47 and His81 each coordinate (2E)-4-hydroxy-3-methylbut-2-enyl diphosphate. Dimethylallyl diphosphate is bound by residues His47 and His81. Residues His47 and His81 each contribute to the isopentenyl diphosphate site. Residue Cys103 coordinates [4Fe-4S] cluster. Residue His131 coordinates (2E)-4-hydroxy-3-methylbut-2-enyl diphosphate. His131 contacts dimethylallyl diphosphate. Isopentenyl diphosphate is bound at residue His131. The active-site Proton donor is the Glu133. Thr172 is a (2E)-4-hydroxy-3-methylbut-2-enyl diphosphate binding site. Cys202 contacts [4Fe-4S] cluster. (2E)-4-hydroxy-3-methylbut-2-enyl diphosphate is bound by residues Ser230, Ser231, Asn232, and Ser275. Dimethylallyl diphosphate contacts are provided by Ser230, Ser231, Asn232, and Ser275. The isopentenyl diphosphate site is built by Ser230, Ser231, Asn232, and Ser275.

The protein belongs to the IspH family. The cofactor is [4Fe-4S] cluster.

The catalysed reaction is isopentenyl diphosphate + 2 oxidized [2Fe-2S]-[ferredoxin] + H2O = (2E)-4-hydroxy-3-methylbut-2-enyl diphosphate + 2 reduced [2Fe-2S]-[ferredoxin] + 2 H(+). The enzyme catalyses dimethylallyl diphosphate + 2 oxidized [2Fe-2S]-[ferredoxin] + H2O = (2E)-4-hydroxy-3-methylbut-2-enyl diphosphate + 2 reduced [2Fe-2S]-[ferredoxin] + 2 H(+). It participates in isoprenoid biosynthesis; dimethylallyl diphosphate biosynthesis; dimethylallyl diphosphate from (2E)-4-hydroxy-3-methylbutenyl diphosphate: step 1/1. Its pathway is isoprenoid biosynthesis; isopentenyl diphosphate biosynthesis via DXP pathway; isopentenyl diphosphate from 1-deoxy-D-xylulose 5-phosphate: step 6/6. In terms of biological role, catalyzes the conversion of 1-hydroxy-2-methyl-2-(E)-butenyl 4-diphosphate (HMBPP) into a mixture of isopentenyl diphosphate (IPP) and dimethylallyl diphosphate (DMAPP). Acts in the terminal step of the DOXP/MEP pathway for isoprenoid precursor biosynthesis. This chain is 4-hydroxy-3-methylbut-2-enyl diphosphate reductase, found in Methylocella silvestris (strain DSM 15510 / CIP 108128 / LMG 27833 / NCIMB 13906 / BL2).